Consider the following 198-residue polypeptide: 3-isopropylmalate dehydratase small subunit (198 aa).

It belongs to the LeuD family. LeuD type 1 subfamily. As to quaternary structure, heterodimer of LeuC and LeuD.

It carries out the reaction (2R,3S)-3-isopropylmalate = (2S)-2-isopropylmalate. It functions in the pathway amino-acid biosynthesis; L-leucine biosynthesis; L-leucine from 3-methyl-2-oxobutanoate: step 2/4. Its function is as follows. Catalyzes the isomerization between 2-isopropylmalate and 3-isopropylmalate, via the formation of 2-isopropylmaleate. The protein is 3-isopropylmalate dehydratase small subunit of Mycobacterium avium (strain 104).